We begin with the raw amino-acid sequence, 351 residues long: Phospho-N-acetylmuramoyl-pentapeptide-transferase (351 aa).

The next 10 membrane-spanning stretches (helical) occupy residues 17 to 37 (TAYA…FIIS), 61 to 83 (MGIP…FFWI), 88 to 105 (IYFL…CLGF), 130 to 150 (ILFS…HVSI), 158 to 178 (SLKL…LISA), 190 to 210 (GLAI…AYLT), 230 to 250 (LVIF…FNAY), 254 to 274 (IMMG…VALI), 279 to 299 (ILFA…IIQV), and 328 to 348 (QVVI…LSTI).

The protein belongs to the glycosyltransferase 4 family. MraY subfamily. It depends on Mg(2+) as a cofactor.

The protein resides in the cell inner membrane. It carries out the reaction UDP-N-acetyl-alpha-D-muramoyl-L-alanyl-gamma-D-glutamyl-meso-2,6-diaminopimeloyl-D-alanyl-D-alanine + di-trans,octa-cis-undecaprenyl phosphate = di-trans,octa-cis-undecaprenyl diphospho-N-acetyl-alpha-D-muramoyl-L-alanyl-D-glutamyl-meso-2,6-diaminopimeloyl-D-alanyl-D-alanine + UMP. Its pathway is cell wall biogenesis; peptidoglycan biosynthesis. In terms of biological role, catalyzes the initial step of the lipid cycle reactions in the biosynthesis of the cell wall peptidoglycan: transfers peptidoglycan precursor phospho-MurNAc-pentapeptide from UDP-MurNAc-pentapeptide onto the lipid carrier undecaprenyl phosphate, yielding undecaprenyl-pyrophosphoryl-MurNAc-pentapeptide, known as lipid I. In Borrelia recurrentis (strain A1), this protein is Phospho-N-acetylmuramoyl-pentapeptide-transferase.